Here is a 495-residue protein sequence, read N- to C-terminus: ATP synthase subunit beta, chloroplastic (495 aa).

172–179 (GGAGVGKT) serves as a coordination point for ATP.

Belongs to the ATPase alpha/beta chains family. In terms of assembly, F-type ATPases have 2 components, CF(1) - the catalytic core - and CF(0) - the membrane proton channel. CF(1) has five subunits: alpha(3), beta(3), gamma(1), delta(1), epsilon(1). CF(0) has four main subunits: a(1), b(1), b'(1) and c(9-12).

The protein localises to the plastid. Its subcellular location is the chloroplast thylakoid membrane. The enzyme catalyses ATP + H2O + 4 H(+)(in) = ADP + phosphate + 5 H(+)(out). Its function is as follows. Produces ATP from ADP in the presence of a proton gradient across the membrane. The catalytic sites are hosted primarily by the beta subunits. This chain is ATP synthase subunit beta, chloroplastic, found in Pseudogaltonia clavata (Cape hyacinth).